We begin with the raw amino-acid sequence, 102 residues long: ATP-dependent Clp protease adapter protein ClpS (102 aa).

Belongs to the ClpS family. In terms of assembly, binds to the N-terminal domain of the chaperone ClpA.

Involved in the modulation of the specificity of the ClpAP-mediated ATP-dependent protein degradation. In Desulfotalea psychrophila (strain LSv54 / DSM 12343), this protein is ATP-dependent Clp protease adapter protein ClpS.